The sequence spans 293 residues: Pyridoxal 5'-phosphate synthase subunit PdxS (293 aa).

Aspartate 23 contacts D-ribose 5-phosphate. Residue lysine 80 is the Schiff-base intermediate with D-ribose 5-phosphate of the active site. Glycine 152 lines the D-ribose 5-phosphate pocket. Arginine 164 contributes to the D-glyceraldehyde 3-phosphate binding site. D-ribose 5-phosphate contacts are provided by residues glycine 213 and 234–235 (GS).

Belongs to the PdxS/SNZ family. As to quaternary structure, in the presence of PdxT, forms a dodecamer of heterodimers.

It catalyses the reaction aldehydo-D-ribose 5-phosphate + D-glyceraldehyde 3-phosphate + L-glutamine = pyridoxal 5'-phosphate + L-glutamate + phosphate + 3 H2O + H(+). Its pathway is cofactor biosynthesis; pyridoxal 5'-phosphate biosynthesis. In terms of biological role, catalyzes the formation of pyridoxal 5'-phosphate from ribose 5-phosphate (RBP), glyceraldehyde 3-phosphate (G3P) and ammonia. The ammonia is provided by the PdxT subunit. Can also use ribulose 5-phosphate and dihydroxyacetone phosphate as substrates, resulting from enzyme-catalyzed isomerization of RBP and G3P, respectively. The protein is Pyridoxal 5'-phosphate synthase subunit PdxS of Methanothermobacter thermautotrophicus (strain ATCC 29096 / DSM 1053 / JCM 10044 / NBRC 100330 / Delta H) (Methanobacterium thermoautotrophicum).